The following is a 91-amino-acid chain: DNA-directed RNA polymerase subunit omega (91 aa).

Belongs to the RNA polymerase subunit omega family. In terms of assembly, the RNAP catalytic core consists of 2 alpha, 1 beta, 1 beta' and 1 omega subunit. When a sigma factor is associated with the core the holoenzyme is formed, which can initiate transcription.

It catalyses the reaction RNA(n) + a ribonucleoside 5'-triphosphate = RNA(n+1) + diphosphate. Its function is as follows. Promotes RNA polymerase assembly. Latches the N- and C-terminal regions of the beta' subunit thereby facilitating its interaction with the beta and alpha subunits. This Syntrophus aciditrophicus (strain SB) protein is DNA-directed RNA polymerase subunit omega.